The following is a 496-amino-acid chain: Glycerol kinase (496 aa).

ADP is bound at residue threonine 12. The ATP site is built by threonine 12, threonine 13, and serine 14. Threonine 12 is a sn-glycerol 3-phosphate binding site. Position 16 (arginine 16) interacts with ADP. The sn-glycerol 3-phosphate site is built by arginine 82, glutamate 83, and tyrosine 134. Residues arginine 82, glutamate 83, and tyrosine 134 each contribute to the glycerol site. Histidine 230 bears the Phosphohistidine; by HPr mark. Aspartate 244 provides a ligand contact to sn-glycerol 3-phosphate. Aspartate 244 and glutamine 245 together coordinate glycerol. ADP contacts are provided by threonine 266 and glycine 309. Residues threonine 266, glycine 309, glutamine 313, and glycine 410 each coordinate ATP. ADP-binding residues include glycine 410 and asparagine 414.

The protein belongs to the FGGY kinase family. In terms of processing, the phosphoenolpyruvate-dependent sugar phosphotransferase system (PTS), including enzyme I, and histidine-containing protein (HPr) are required for the phosphorylation of, which leads to the activation of the enzyme.

It catalyses the reaction glycerol + ATP = sn-glycerol 3-phosphate + ADP + H(+). The protein operates within polyol metabolism; glycerol degradation via glycerol kinase pathway; sn-glycerol 3-phosphate from glycerol: step 1/1. Inhibited by fructose 1,6-bisphosphate and p-chloromercuribenzoate (PCMB). Functionally, key enzyme in the regulation of glycerol uptake and metabolism. Catalyzes the phosphorylation of glycerol to yield sn-glycerol 3-phosphate. This Thermus thermophilus protein is Glycerol kinase.